The chain runs to 237 residues: Cysteine-rich venom protein ENH2 (237 aa).

The N-terminal stretch at 1–18 (MIVFILLSLAAVLQQFVA) is a signal peptide. In terms of domain architecture, SCP spans 37–165 (VDMHNSFRRS…PYNYFYVCQY (129 aa)). Disulfide bonds link C74/C152, C91/C166, C147/C163, C185/C192, C188/C197, C210/C228, and C219/C232. The ShKT domain maps to 201–237 (CPITNTFTNCDSLLQQNSCEDSYIKTNCGASCFGQDK).

The protein belongs to the CRISP family. As to expression, expressed by the venom gland.

The protein localises to the secreted. Its function is as follows. Blocks contraction of smooth muscle elicited by high potassium-induced depolarization, but does not block caffeine-stimulated contraction. May target voltage-gated calcium channels on smooth muscle. The protein is Cysteine-rich venom protein ENH2 of Pseudoferania polylepis (Macleay's water snake).